A 295-amino-acid polypeptide reads, in one-letter code: Glycine N-methyltransferase (295 aa).

(6S)-5-methyl-5,6,7,8-tetrahydrofolate contacts are provided by Ser4 and Tyr6. Ser10 is modified (phosphoserine). 4 residues coordinate S-adenosyl-L-methionine: Tyr22, Trp31, Tyr34, and Arg41. Phosphotyrosine is present on Tyr34. Lys46 is modified (N6-succinyllysine). S-adenosyl-L-methionine is bound by residues Ala65, 86–88 (DAS), 117–118 (NW), 139–142 (LGNS), and Arg178. N6-succinyllysine occurs at positions 193, 198, and 203. His217 contributes to the (6S)-5-methyl-5,6,7,8-tetrahydrofolate binding site. S-adenosyl-L-methionine is bound at residue Tyr223. Arg242 provides a ligand contact to (6S)-5-methyl-5,6,7,8-tetrahydrofolate.

The protein belongs to the class I-like SAM-binding methyltransferase superfamily. Glycine N-methyltransferase family. Homotetramer. In terms of tissue distribution, abundant in liver.

The protein resides in the cytoplasm. The catalysed reaction is glycine + S-adenosyl-L-methionine = sarcosine + S-adenosyl-L-homocysteine + H(+). With respect to regulation, inhibited by 5-methyltetrahydrofolate monoglutamate and by 5-methyltetrahydrofolate pentaglutamate, inhibition is much more effective by the pentaglutamate form than by the monoglutamate form. Two molecules of 5-methyltetrahydrofolate are bound per tetramer. The binding sites are localized between subunits. Inhibitor binding may preclude movements of the polypeptide chain that are necessary for enzyme activity. In terms of biological role, catalyzes the methylation of glycine by using S-adenosylmethionine (AdoMet) to form N-methylglycine (sarcosine) with the concomitant production of S-adenosylhomocysteine (AdoHcy), a reaction regulated by the binding of 5-methyltetrahydrofolate. Plays an important role in the regulation of methyl group metabolism by regulating the ratio between S-adenosyl-L-methionine and S-adenosyl-L-homocysteine. The polypeptide is Glycine N-methyltransferase (GNMT) (Oryctolagus cuniculus (Rabbit)).